The following is a 341-amino-acid chain: Anthranilate phosphoribosyltransferase (341 aa).

Residues Gly-82, 85–86 (GD), Thr-90, 92–95 (NIST), 110–118 (KHGNRAITS), and Thr-122 each bind 5-phospho-alpha-D-ribose 1-diphosphate. Anthranilate is bound at residue Gly-82. Ser-94 contributes to the Mg(2+) binding site. Asn-113 provides a ligand contact to anthranilate. Arg-168 serves as a coordination point for anthranilate. Mg(2+) contacts are provided by Asp-226 and Glu-227.

It belongs to the anthranilate phosphoribosyltransferase family. In terms of assembly, homodimer. It depends on Mg(2+) as a cofactor.

The enzyme catalyses N-(5-phospho-beta-D-ribosyl)anthranilate + diphosphate = 5-phospho-alpha-D-ribose 1-diphosphate + anthranilate. The protein operates within amino-acid biosynthesis; L-tryptophan biosynthesis; L-tryptophan from chorismate: step 2/5. Functionally, catalyzes the transfer of the phosphoribosyl group of 5-phosphorylribose-1-pyrophosphate (PRPP) to anthranilate to yield N-(5'-phosphoribosyl)-anthranilate (PRA). In Caulobacter vibrioides (strain ATCC 19089 / CIP 103742 / CB 15) (Caulobacter crescentus), this protein is Anthranilate phosphoribosyltransferase.